The sequence spans 168 residues: Cell division inhibitor SulA (168 aa).

Residues 105–111 (ALLTGNY) are ftsZ binding. The interval 161-168 (KIHSTLYH) is lon protease binding.

The protein belongs to the SulA family. As to quaternary structure, interacts with FtsZ. Post-translationally, is rapidly cleaved and degraded by the Lon protease once DNA damage is repaired.

Component of the SOS system and an inhibitor of cell division. Accumulation of SulA causes rapid cessation of cell division and the appearance of long, non-septate filaments. In the presence of GTP, binds a polymerization-competent form of FtsZ in a 1:1 ratio, thus inhibiting FtsZ polymerization and therefore preventing it from participating in the assembly of the Z ring. This mechanism prevents the premature segregation of damaged DNA to daughter cells during cell division. This is Cell division inhibitor SulA from Pectobacterium carotovorum subsp. carotovorum (strain PC1).